A 312-amino-acid chain; its full sequence is Olfactory receptor 8H3 (312 aa).

Residues 1–26 (MMGRRNDTNVADFILTGLSDSEEVQM) lie on the Extracellular side of the membrane. The N-linked (GlcNAc...) asparagine glycan is linked to N6. Residues 27-47 (ALFMLFLLIYLITMLGNVGML) traverse the membrane as a helical segment. Residues 48 to 55 (LIIRLDLQ) lie on the Cytoplasmic side of the membrane. A helical transmembrane segment spans residues 56–76 (LHTPMYFFLTHLSFIDLSYST). The Extracellular portion of the chain corresponds to 77 to 99 (VVTPKTLANLLTSNYISFTGCFA). A disulfide bridge connects residues C97 and C189. Residues 100–120 (QMFCFVFLGTAECYLLSSMAY) traverse the membrane as a helical segment. The Cytoplasmic portion of the chain corresponds to 121 to 139 (DRYAAICSPLHYTVIMPKR). Residues 140–160 (LCLALITGPYVIGFMDSFVNV) form a helical membrane-spanning segment. Residues 161–197 (VSMSRLHFCDSNIIHHFFCDTSPILALSCTDTDNTEM) lie on the Extracellular side of the membrane. A helical transmembrane segment spans residues 198–217 (LIFIIAGSTLMVSLITISAS). Over 218–237 (YVSILSTILKINSTSGKQKA) the chain is Cytoplasmic. The chain crosses the membrane as a helical span at residues 238 to 258 (FSTCVSHLLGVTIFYGTMIFT). At 259–271 (YLKPRKSYSLGRD) the chain is on the extracellular side. A helical transmembrane segment spans residues 272 to 292 (QVAPVFYTIVIPMLNPLIYSL). The Cytoplasmic portion of the chain corresponds to 293–312 (RNREVKNALIRVMQRRQDSR).

It belongs to the G-protein coupled receptor 1 family.

The protein localises to the cell membrane. Its function is as follows. Odorant receptor. This chain is Olfactory receptor 8H3 (OR8H3), found in Homo sapiens (Human).